A 211-amino-acid chain; its full sequence is Transcription factor ces-2 (211 aa).

Low complexity predominate over residues 83 to 101 (VSSRSSTVSSSHFSSPQRS). Disordered stretches follow at residues 83–152 (VSSR…HALE) and 184–211 (NSEVSCESNDSTETNDSNDSKSDSTIEV). Basic and acidic residues predominate over residues 111–152 (PEEKKDSAYFERRRKNNDAAKRSRDARRQKEEQIASKAHALE). The region spanning 116–179 (DSAYFERRRK…AQLRFLLFSK (64 aa)) is the bZIP domain. The basic motif stretch occupies residues 122–140 (RRRKNNDAAKRSRDARRQK). The tract at residues 144-172 (IASKAHALERENMQLRGKVSSLEQEAAQL) is leucine-zipper. Over residues 190-200 (ESNDSTETNDS) the composition is skewed to low complexity. Residues 201–211 (NDSKSDSTIEV) show a composition bias toward basic and acidic residues.

This sequence belongs to the bZIP family. As to quaternary structure, interacts with NFIL3 transcription factor homolog atf-2.

Its subcellular location is the nucleus. In terms of biological role, transcription factor. Required to activate programmed cell death in the sister cells of the serotoninergic neurosecretory motor (NSM) neurons. Negatively regulates the activity of ces-1 which in turn negatively regulates the activities of cell-killing genes. Binds to the DNA sequence 5'-RTTACGTAAY-3'. Involved in the development of the excretory duct cell, by positively modulating embryonic transcription of putative transcription factor lin-48, acting in concert with NFIL3 transcription factor homolog atf-2. Positively modulates expression of neuropeptide pigment dispersing factor homologs pdf-1 and pdf-2. This Caenorhabditis elegans protein is Transcription factor ces-2 (ces-2).